Consider the following 80-residue polypeptide: RNA-binding protein Hfq (80 aa).

The 61-residue stretch at 10 to 70 folds into the Sm domain; sequence DLFLNTVRKQ…ISTIMPGQPM (61 aa).

This sequence belongs to the Hfq family. Homohexamer.

Functionally, RNA chaperone that binds small regulatory RNA (sRNAs) and mRNAs to facilitate mRNA translational regulation in response to envelope stress, environmental stress and changes in metabolite concentrations. Also binds with high specificity to tRNAs. In Rhizobium etli (strain CIAT 652), this protein is RNA-binding protein Hfq.